The primary structure comprises 199 residues: Nucleoside triphosphate pyrophosphatase (199 aa).

Aspartate 76 acts as the Proton acceptor in catalysis.

Belongs to the Maf family. Requires a divalent metal cation as cofactor.

The protein localises to the cytoplasm. The catalysed reaction is a ribonucleoside 5'-triphosphate + H2O = a ribonucleoside 5'-phosphate + diphosphate + H(+). It carries out the reaction a 2'-deoxyribonucleoside 5'-triphosphate + H2O = a 2'-deoxyribonucleoside 5'-phosphate + diphosphate + H(+). In terms of biological role, nucleoside triphosphate pyrophosphatase. May have a dual role in cell division arrest and in preventing the incorporation of modified nucleotides into cellular nucleic acids. The sequence is that of Nucleoside triphosphate pyrophosphatase from Ruegeria pomeroyi (strain ATCC 700808 / DSM 15171 / DSS-3) (Silicibacter pomeroyi).